The chain runs to 351 residues: Dihydroorotate dehydrogenase (quinone) (351 aa).

Residues 61–65 and threonine 85 each bind FMN; that span reads AGLDK. Position 65 (lysine 65) interacts with substrate. 110–114 is a binding site for substrate; the sequence is NRMGF. 2 residues coordinate FMN: asparagine 139 and asparagine 172. Residue asparagine 172 participates in substrate binding. Serine 175 acts as the Nucleophile in catalysis. Residue asparagine 177 participates in substrate binding. The FMN site is built by lysine 217 and threonine 245. 246 to 247 serves as a coordination point for substrate; the sequence is NT. Residues glycine 268, glycine 297, and 318-319 contribute to the FMN site; that span reads YT.

This sequence belongs to the dihydroorotate dehydrogenase family. Type 2 subfamily. In terms of assembly, monomer. FMN serves as cofactor.

It is found in the cell membrane. It catalyses the reaction (S)-dihydroorotate + a quinone = orotate + a quinol. The protein operates within pyrimidine metabolism; UMP biosynthesis via de novo pathway; orotate from (S)-dihydroorotate (quinone route): step 1/1. Functionally, catalyzes the conversion of dihydroorotate to orotate with quinone as electron acceptor. The polypeptide is Dihydroorotate dehydrogenase (quinone) (Xylella fastidiosa (strain 9a5c)).